The following is a 146-amino-acid chain: Large ribosomal subunit protein bL17 (146 aa).

The segment at 118–146 (RDPAAKGQDSGPKPEVASDEDEAGEAAAA) is disordered. The segment covering 134–146 (ASDEDEAGEAAAA) has biased composition (acidic residues).

It belongs to the bacterial ribosomal protein bL17 family. As to quaternary structure, part of the 50S ribosomal subunit. Contacts protein L32.

This chain is Large ribosomal subunit protein bL17, found in Acidiphilium cryptum (strain JF-5).